The following is a 479-amino-acid chain: Ribosomal RNA small subunit methyltransferase F (479 aa).

S-adenosyl-L-methionine contacts are provided by residues 125 to 131, E149, D176, and D194; that span reads AAAPGSK. Catalysis depends on C247, which acts as the Nucleophile.

This sequence belongs to the class I-like SAM-binding methyltransferase superfamily. RsmB/NOP family.

The protein resides in the cytoplasm. It carries out the reaction cytidine(1407) in 16S rRNA + S-adenosyl-L-methionine = 5-methylcytidine(1407) in 16S rRNA + S-adenosyl-L-homocysteine + H(+). In terms of biological role, specifically methylates the cytosine at position 1407 (m5C1407) of 16S rRNA. This Salmonella schwarzengrund (strain CVM19633) protein is Ribosomal RNA small subunit methyltransferase F.